We begin with the raw amino-acid sequence, 174 residues long: Transcriptional repressor NrdR (174 aa).

A zinc finger lies at Cys-3 to Cys-34. The ATP-cone domain occupies Leu-49 to Lys-139. The interval Glu-151 to Met-174 is disordered. A compositionally biased stretch (polar residues) spans Asn-155–Met-174.

The protein belongs to the NrdR family. The cofactor is Zn(2+).

Functionally, negatively regulates transcription of bacterial ribonucleotide reductase nrd genes and operons by binding to NrdR-boxes. This chain is Transcriptional repressor NrdR, found in Chloroflexus aggregans (strain MD-66 / DSM 9485).